A 633-amino-acid polypeptide reads, in one-letter code: ATP-dependent zinc metalloprotease FtsH (633 aa).

At 1-19 (MTPSNEPGKQDQIPQPGPT) the chain is on the cytoplasmic side. Residues 20–40 (IPNQYSFLWLSAAIFLMFLWL) form a helical membrane-spanning segment. At 41 to 133 (QGNNQQQQQE…SRSGRPWWQE (93 aa)) the chain is on the periplasmic side. Residues 134–154 (LILGFLPWILLLALMFWFWGA) traverse the membrane as a helical segment. Residues 155 to 633 (AQKRMTQGGG…LEEARSRETA (479 aa)) lie on the Cytoplasmic side of the membrane. ATP is bound at residue 226–233 (GPPGTGKT). Histidine 447 contributes to the Zn(2+) binding site. Glutamate 448 is an active-site residue. Zn(2+)-binding residues include histidine 451 and aspartate 523.

It in the central section; belongs to the AAA ATPase family. This sequence in the C-terminal section; belongs to the peptidase M41 family. Homohexamer. The cofactor is Zn(2+).

Its subcellular location is the cell inner membrane. Functionally, acts as a processive, ATP-dependent zinc metallopeptidase for both cytoplasmic and membrane proteins. Plays a role in the quality control of integral membrane proteins. This Marinobacter nauticus (strain ATCC 700491 / DSM 11845 / VT8) (Marinobacter aquaeolei) protein is ATP-dependent zinc metalloprotease FtsH.